A 464-amino-acid chain; its full sequence is UDP-glycosyltransferase 76F2 (464 aa).

UDP-alpha-D-glucose-binding positions include S279, 338-340 (VNQ), 355-363 (HCGWNSTIE), and 377-380 (FSDQ).

This sequence belongs to the UDP-glycosyltransferase family.

The polypeptide is UDP-glycosyltransferase 76F2 (UGT76F2) (Arabidopsis thaliana (Mouse-ear cress)).